A 93-amino-acid chain; its full sequence is Integration host factor subunit beta (93 aa).

Belongs to the bacterial histone-like protein family. As to quaternary structure, heterodimer of an alpha and a beta chain.

Its function is as follows. This protein is one of the two subunits of integration host factor, a specific DNA-binding protein that functions in genetic recombination as well as in transcriptional and translational control. The polypeptide is Integration host factor subunit beta (Actinobacillus pleuropneumoniae serotype 7 (strain AP76)).